Here is a 189-residue protein sequence, read N- to C-terminus: TATA-box-binding protein 1 (189 aa).

2 tandem repeats follow at residues 10–86 (IENV…FDKL) and 101–179 (VQNI…ISRL).

This sequence belongs to the TBP family.

Functionally, general factor that plays a role in the activation of archaeal genes transcribed by RNA polymerase. Binds specifically to the TATA box promoter element which lies close to the position of transcription initiation. The chain is TATA-box-binding protein 1 (tbp1) from Haloferax volcanii (strain ATCC 29605 / DSM 3757 / JCM 8879 / NBRC 14742 / NCIMB 2012 / VKM B-1768 / DS2) (Halobacterium volcanii).